Consider the following 454-residue polypeptide: Bifunctional protein GlmU (454 aa).

The segment at 1–226 (MALNVVILAA…AVEVEGANNR (226 aa)) is pyrophosphorylase. UDP-N-acetyl-alpha-D-glucosamine contacts are provided by residues 8 to 11 (LAAG), Lys-22, Gln-73, 78 to 79 (GT), 100 to 102 (YGD), Gly-137, Glu-151, Asn-166, and Asn-224. Asp-102 provides a ligand contact to Mg(2+). Asn-224 serves as a coordination point for Mg(2+). Residues 227-247 (VQLAQLERAYQARAAEKLMLE) are linker. Positions 248–454 (GANLRDPARI…GWARPVKKAK (207 aa)) are N-acetyltransferase. Positions 330 and 348 each coordinate UDP-N-acetyl-alpha-D-glucosamine. The active-site Proton acceptor is His-360. Tyr-363 and Asn-374 together coordinate UDP-N-acetyl-alpha-D-glucosamine. Residues Ala-377, 383–384 (NY), Ser-402, Ala-420, and Arg-437 contribute to the acetyl-CoA site.

In the N-terminal section; belongs to the N-acetylglucosamine-1-phosphate uridyltransferase family. It in the C-terminal section; belongs to the transferase hexapeptide repeat family. Homotrimer. The cofactor is Mg(2+).

Its subcellular location is the cytoplasm. The catalysed reaction is alpha-D-glucosamine 1-phosphate + acetyl-CoA = N-acetyl-alpha-D-glucosamine 1-phosphate + CoA + H(+). The enzyme catalyses N-acetyl-alpha-D-glucosamine 1-phosphate + UTP + H(+) = UDP-N-acetyl-alpha-D-glucosamine + diphosphate. Its pathway is nucleotide-sugar biosynthesis; UDP-N-acetyl-alpha-D-glucosamine biosynthesis; N-acetyl-alpha-D-glucosamine 1-phosphate from alpha-D-glucosamine 6-phosphate (route II): step 2/2. It participates in nucleotide-sugar biosynthesis; UDP-N-acetyl-alpha-D-glucosamine biosynthesis; UDP-N-acetyl-alpha-D-glucosamine from N-acetyl-alpha-D-glucosamine 1-phosphate: step 1/1. The protein operates within bacterial outer membrane biogenesis; LPS lipid A biosynthesis. In terms of biological role, catalyzes the last two sequential reactions in the de novo biosynthetic pathway for UDP-N-acetylglucosamine (UDP-GlcNAc). The C-terminal domain catalyzes the transfer of acetyl group from acetyl coenzyme A to glucosamine-1-phosphate (GlcN-1-P) to produce N-acetylglucosamine-1-phosphate (GlcNAc-1-P), which is converted into UDP-GlcNAc by the transfer of uridine 5-monophosphate (from uridine 5-triphosphate), a reaction catalyzed by the N-terminal domain. The sequence is that of Bifunctional protein GlmU from Shewanella piezotolerans (strain WP3 / JCM 13877).